The primary structure comprises 144 residues: UPF0306 protein ESA_03544 (144 aa).

Belongs to the UPF0306 family.

The chain is UPF0306 protein ESA_03544 from Cronobacter sakazakii (strain ATCC BAA-894) (Enterobacter sakazakii).